The sequence spans 61 residues: MAGKTLKVTQIGSPIRRTADQRATLIGLGLNKMHRTRELQDTPEVRGMIRKVQHMVKVDEA.

This sequence belongs to the universal ribosomal protein uL30 family. Part of the 50S ribosomal subunit.

The chain is Large ribosomal subunit protein uL30 from Rhizorhabdus wittichii (strain DSM 6014 / CCUG 31198 / JCM 15750 / NBRC 105917 / EY 4224 / RW1) (Sphingomonas wittichii).